The sequence spans 165 residues: Protein C2-DOMAIN ABA-RELATED 8 (165 aa).

Met-1 is modified (N-acetylmethionine). In terms of domain architecture, C2 spans 1–106; the sequence is MENLVGLLRI…QGTDIQELTN (106 aa). Residues Arg-21, Asp-22, Asp-27, Asp-73, Lys-74, Asp-75, and Asp-81 each contribute to the Ca(2+) site.

This sequence belongs to the plant CAR protein family. Binds to PYR/PYL/RCAR abscisic acid intracellular receptors in an ABA-independent manner, both at the plasma membrane and in the nucleus.

The protein resides in the cell membrane. The protein localises to the nucleus. In terms of biological role, stimulates the GTPase/ATPase activities of Obg-like ATPases. Mediates the transient calcium-dependent interaction of PYR/PYL/RCAR abscisic acid (ABA) receptors with the plasma membrane and thus regulates ABA sensitivity. The sequence is that of Protein C2-DOMAIN ABA-RELATED 8 from Arabidopsis thaliana (Mouse-ear cress).